A 463-amino-acid polypeptide reads, in one-letter code: UDP-N-acetylmuramoylalanine--D-glutamate ligase (463 aa).

121–127 is a binding site for ATP; sequence GTNGKST.

The protein belongs to the MurCDEF family.

Its subcellular location is the cytoplasm. The catalysed reaction is UDP-N-acetyl-alpha-D-muramoyl-L-alanine + D-glutamate + ATP = UDP-N-acetyl-alpha-D-muramoyl-L-alanyl-D-glutamate + ADP + phosphate + H(+). Its pathway is cell wall biogenesis; peptidoglycan biosynthesis. In terms of biological role, cell wall formation. Catalyzes the addition of glutamate to the nucleotide precursor UDP-N-acetylmuramoyl-L-alanine (UMA). In Rhizobium meliloti (strain 1021) (Ensifer meliloti), this protein is UDP-N-acetylmuramoylalanine--D-glutamate ligase (murD).